The primary structure comprises 430 residues: Histidine--tRNA ligase (430 aa).

The protein belongs to the class-II aminoacyl-tRNA synthetase family. In terms of assembly, homodimer.

The protein localises to the cytoplasm. It carries out the reaction tRNA(His) + L-histidine + ATP = L-histidyl-tRNA(His) + AMP + diphosphate + H(+). In Acaryochloris marina (strain MBIC 11017), this protein is Histidine--tRNA ligase.